A 539-amino-acid chain; its full sequence is Probable transcription factor GLK2 (539 aa).

The tract at residues 86-218 (FASSPDDEPP…NSHGKRKVKV (133 aa)) is disordered. 2 stretches are compositionally biased toward low complexity: residues 99–111 (SAPGPGEPAAAAG) and 121–130 (AAAAAAAAAA). Residues 144-161 (KKDDEERSSSLPEEKDAK) show a composition bias toward basic and acidic residues. Positions 212 to 271 (GKRKVKVDWTPELHRRFVQAVEQLGIDKAVPSRILELMGIECLTRHNIASHLQKYRSHRK) constitute an HTH myb-type domain. The H-T-H motif DNA-binding region spans 242–267 (PSRILELMGIECLTRHNIASHLQKYR).

Expressed in leaves.

It is found in the nucleus. Probable transcriptional activator that promotes chloroplast development. Acts as an activator of nuclear photosynthetic genes involved in chlorophyll biosynthesis, light harvesting, and electron transport. The protein is Probable transcription factor GLK2 (GLK2) of Oryza sativa subsp. japonica (Rice).